We begin with the raw amino-acid sequence, 99 residues long: Gibberellin-regulated protein 3 (99 aa).

The first 26 residues, 1 to 26 (MAIFRSTLVLLLILFCLTTFELHVHA), serve as a signal peptide directing secretion.

The protein belongs to the GASA family. Post-translationally, six disulfide bonds may be present. As to expression, expressed in siliques, dry seeds and vasculature of roots and rosette leaves.

It is found in the secreted. Functionally, gibberellin-regulated protein that may function in hormonal controlled steps of development such as seed germination, flowering and seed maturation. The protein is Gibberellin-regulated protein 3 (GASA3) of Arabidopsis thaliana (Mouse-ear cress).